The following is a 371-amino-acid chain: Regulatory protein RapK (371 aa).

TPR repeat units follow at residues 7–42 (EVVA…FDEM), 93–130 (EYNF…IPDE), 175–208 (ATST…AKET), 215–248 (AQLF…ESWL), 254–290 (INSL…MENK), and 331–364 (DELS…EQKM).

This sequence belongs to the Rap family.

The protein resides in the cytoplasm. With respect to regulation, inhibited by PhrK, which prevents RapK-ComA interaction. Its function is as follows. Involved in the regulation of genetic competence development. Inhibits the activity of ComA, a transcriptional factor that regulates the development of genetic competence. Likely affects the activity of additional regulators, in particular Spo0A. The chain is Regulatory protein RapK (rapK) from Bacillus subtilis (strain 168).